The chain runs to 337 residues: Vacuolar protein sorting-associated protein 26B-A (337 aa).

The segment at 313 to 337 (RFEGTSHPETRPQHSGAAAVEQEHE) is disordered.

Belongs to the VPS26 family. In terms of assembly, component of the heterotrimeric retromer cargo-selective complex (CSC) which is believed to associate with variable sorting nexins to form functionally distinct retromer complex variants.

Its subcellular location is the cytoplasm. The protein localises to the endosome membrane. It localises to the early endosome. Acts as a component of the retromer cargo-selective complex (CSC). The CSC is believed to be the core functional component of retromer or respective retromer complex variants acting to prevent missorting of selected transmembrane cargo proteins into the lysosomal degradation pathway. Retromer mediates retrograde transport of cargo proteins from endosomes to the trans-Golgi network (TGN). The sequence is that of Vacuolar protein sorting-associated protein 26B-A (vps26b-a) from Xenopus laevis (African clawed frog).